The sequence spans 251 residues: Uroporphyrinogen-III synthase (251 aa).

The disordered stretch occupies residues 231-251 (PAPNPESLASSIVAFDEENSS).

This sequence belongs to the uroporphyrinogen-III synthase family.

The enzyme catalyses hydroxymethylbilane = uroporphyrinogen III + H2O. It participates in porphyrin-containing compound metabolism; protoporphyrin-IX biosynthesis; coproporphyrinogen-III from 5-aminolevulinate: step 3/4. Its function is as follows. Catalyzes cyclization of the linear tetrapyrrole, hydroxymethylbilane, to the macrocyclic uroporphyrinogen III. The polypeptide is Uroporphyrinogen-III synthase (ups1) (Schizosaccharomyces pombe (strain 972 / ATCC 24843) (Fission yeast)).